The chain runs to 256 residues: Imidazole glycerol phosphate synthase subunit HisF (256 aa).

Residues Asp-11 and Asp-130 contribute to the active site.

This sequence belongs to the HisA/HisF family. As to quaternary structure, heterodimer of HisH and HisF.

It is found in the cytoplasm. It carries out the reaction 5-[(5-phospho-1-deoxy-D-ribulos-1-ylimino)methylamino]-1-(5-phospho-beta-D-ribosyl)imidazole-4-carboxamide + L-glutamine = D-erythro-1-(imidazol-4-yl)glycerol 3-phosphate + 5-amino-1-(5-phospho-beta-D-ribosyl)imidazole-4-carboxamide + L-glutamate + H(+). The protein operates within amino-acid biosynthesis; L-histidine biosynthesis; L-histidine from 5-phospho-alpha-D-ribose 1-diphosphate: step 5/9. IGPS catalyzes the conversion of PRFAR and glutamine to IGP, AICAR and glutamate. The HisF subunit catalyzes the cyclization activity that produces IGP and AICAR from PRFAR using the ammonia provided by the HisH subunit. This chain is Imidazole glycerol phosphate synthase subunit HisF, found in Thioalkalivibrio sulfidiphilus (strain HL-EbGR7).